The chain runs to 362 residues: Histidine biosynthesis bifunctional protein HisB (362 aa).

The segment at 1–173 (MQPTLFIDRD…TVTNCGKRPP (173 aa)) is histidinol-phosphatase. D8 serves as the catalytic Nucleophile. Mg(2+) contacts are provided by D8 and D10. Catalysis depends on D10, which acts as the Proton donor. The Zn(2+) site is built by C91, H93, C99, and C101. D128 serves as a coordination point for Mg(2+). The imidazoleglycerol-phosphate dehydratase stretch occupies residues 174–362 (RFAEVIRQTK…NEMPSSKGVL (189 aa)).

It in the N-terminal section; belongs to the histidinol-phosphatase family. The protein in the C-terminal section; belongs to the imidazoleglycerol-phosphate dehydratase family. The cofactor is Mg(2+). It depends on Zn(2+) as a cofactor.

The protein resides in the cytoplasm. It carries out the reaction D-erythro-1-(imidazol-4-yl)glycerol 3-phosphate = 3-(imidazol-4-yl)-2-oxopropyl phosphate + H2O. The enzyme catalyses L-histidinol phosphate + H2O = L-histidinol + phosphate. It functions in the pathway amino-acid biosynthesis; L-histidine biosynthesis; L-histidine from 5-phospho-alpha-D-ribose 1-diphosphate: step 6/9. It participates in amino-acid biosynthesis; L-histidine biosynthesis; L-histidine from 5-phospho-alpha-D-ribose 1-diphosphate: step 8/9. This chain is Histidine biosynthesis bifunctional protein HisB, found in Haemophilus influenzae (strain 86-028NP).